Consider the following 125-residue polypeptide: UPF0763 protein NAMH_0545 (125 aa).

This sequence belongs to the UPF0763 family.

The sequence is that of UPF0763 protein NAMH_0545 from Nautilia profundicola (strain ATCC BAA-1463 / DSM 18972 / AmH).